Reading from the N-terminus, the 376-residue chain is Cytochrome b (376 aa).

Transmembrane regions (helical) follow at residues 28-48 (YGFLLGIIFFIQIITGVFLAS), 72-94 (WCFRYMHATGASLVFLLTYLHIL), 107-127 (SWISGLILFMIFIVTAFVGYV), and 169-189 (FFVLHFILPFIGLCIVFIHIF). Residues histidine 78 and histidine 92 each coordinate heme b. Positions 173 and 187 each coordinate heme b. Histidine 192 contacts a ubiquinone. 4 helical membrane passes run 214 to 234 (LLSLDVKGFNNVIILFLIQSL), 274 to 294 (VPSKPAGLVIVLLSLQLLFLL), 317 to 337 (VPIIWFMCAFYALLWIGCQLP), and 340 to 360 (IFILYGRLFIVLFFCSGLFVL).

It belongs to the cytochrome b family. The main subunits of complex b-c1 are: cytochrome b, cytochrome c1 and the Rieske protein. Heme b serves as cofactor.

It is found in the mitochondrion inner membrane. Functionally, component of the ubiquinol-cytochrome c reductase complex (complex III or cytochrome b-c1 complex) that is part of the mitochondrial respiratory chain. The b-c1 complex mediates electron transfer from ubiquinol to cytochrome c. Contributes to the generation of a proton gradient across the mitochondrial membrane that is then used for ATP synthesis. The sequence is that of Cytochrome b (MT-CYB) from Plasmodium falciparum.